We begin with the raw amino-acid sequence, 74 residues long: Cytochrome b (74 aa).

The chain crosses the membrane as a helical span at residues 34 to 54 (FGSLLAICLVTQILTGLLLAM).

Belongs to the cytochrome b family. In terms of assembly, the cytochrome bc1 complex contains 11 subunits: 3 respiratory subunits (MT-CYB, CYC1 and UQCRFS1), 2 core proteins (UQCRC1 and UQCRC2) and 6 low-molecular weight proteins (UQCRH/QCR6, UQCRB/QCR7, UQCRQ/QCR8, UQCR10/QCR9, UQCR11/QCR10 and a cleavage product of UQCRFS1). This cytochrome bc1 complex then forms a dimer. Heme is required as a cofactor.

The protein resides in the mitochondrion inner membrane. Its function is as follows. Component of the ubiquinol-cytochrome c reductase complex (complex III or cytochrome b-c1 complex) that is part of the mitochondrial respiratory chain. The b-c1 complex mediates electron transfer from ubiquinol to cytochrome c. Contributes to the generation of a proton gradient across the mitochondrial membrane that is then used for ATP synthesis. This chain is Cytochrome b (MT-CYB), found in Anser caerulescens (Snow goose).